The sequence spans 140 residues: GGSDVSAFLAKVDKRAVGGEALARLLIVYPWTQRYFSTFGNLGSADAISHNSKVLAHGQRVLDSIEEGLKHPZBLKAYYAKLSERHSGELHVDPANFYRLGNVLITVMARHFHEEFTPELQCALHSSFCAVGEALAKGYH.

A Globin domain is found at 1–140 (GGSDVSAFLA…VGEALAKGYH (140 aa)). Heme b is bound by residues histidine 57 and histidine 86.

Belongs to the globin family. As to quaternary structure, heterotetramer of either two alpha-B chains or two alpha-C chains and two beta chains.

Functionally, the beta chain is a component of adult hemoglobins B. And C. This chain is Hemoglobin subunit beta (HBB), found in Aquarana catesbeiana (American bullfrog).